We begin with the raw amino-acid sequence, 455 residues long: Tryptophan dimethylallyltransferase (455 aa).

L-tryptophan-binding positions include 79 to 80 (VL) and glutamate 88. Substrate contacts are provided by arginine 99, lysine 186, and tyrosine 188. L-tryptophan is bound by residues tyrosine 190 and arginine 256. Substrate contacts are provided by arginine 269, lysine 271, tyrosine 273, glutamine 355, tyrosine 357, tyrosine 421, and tyrosine 425.

Belongs to the tryptophan dimethylallyltransferase family. Homodimer.

It carries out the reaction L-tryptophan + dimethylallyl diphosphate = 4-(3-methylbut-2-enyl)-L-tryptophan + diphosphate. It functions in the pathway alkaloid biosynthesis; ergot alkaloid biosynthesis. Its function is as follows. Tryptophan dimethylallyltransferase; part of the gene cluster that mediates the biosynthesis of fungal ergot alkaloid. DmaW catalyzes the first step of ergot alkaloid biosynthesis by condensing dimethylallyl diphosphate (DMAP) and tryptophan to form 4-dimethylallyl-L-tryptophan. The second step is catalyzed by the methyltransferase easF that methylates 4-dimethylallyl-L-tryptophan in the presence of S-adenosyl-L-methionine, resulting in the formation of 4-dimethylallyl-L-abrine. The catalase easC and the FAD-dependent oxidoreductase easE then transform 4-dimethylallyl-L-abrine to chanoclavine-I which is further oxidized by easD in the presence of NAD(+), resulting in the formation of chanoclavine-I aldehyde. Agroclavine dehydrogenase easG then mediates the conversion of chanoclavine-I aldehyde to agroclavine via a non-enzymatic adduct reaction: the substrate is an iminium intermediate that is formed spontaneously from chanoclavine-I aldehyde in the presence of glutathione. Further conversion of agroclavine to paspalic acid is a two-step process involving oxidation of agroclavine to elymoclavine and of elymoclavine to paspalic acid, the second step being performed by the elymoclavine oxidase cloA. However, cloA does not encode a functional enzyme indicating that C.fusiformis terminates its ergot alkaloid pathway at elymoclavine. The chain is Tryptophan dimethylallyltransferase from Claviceps fusiformis (Ergot fungus).